Here is a 146-residue protein sequence, read N- to C-terminus: Protein archease (146 aa).

Ca(2+) contacts are provided by Asp16, Asp145, and Ile146.

The protein belongs to the archease family.

Its function is as follows. Activates the tRNA-splicing ligase complex by facilitating the enzymatic turnover of catalytic subunit RtcB. Acts by promoting the guanylylation of RtcB, a key intermediate step in tRNA ligation. Can also alter the NTP specificity of RtcB such that ATP, dGTP or ITP is used efficiently. The sequence is that of Protein archease from Methanosarcina barkeri (strain Fusaro / DSM 804).